The chain runs to 135 residues: NADPH-dependent 7-cyano-7-deazaguanine reductase (135 aa).

Residue Cys48 is the Thioimide intermediate of the active site. Asp55 serves as the catalytic Proton donor. Substrate contacts are provided by residues 70–72 and 89–90; these read LEL and HE.

Belongs to the GTP cyclohydrolase I family. QueF type 1 subfamily.

The protein localises to the cytoplasm. The catalysed reaction is 7-aminomethyl-7-carbaguanine + 2 NADP(+) = 7-cyano-7-deazaguanine + 2 NADPH + 3 H(+). Its pathway is tRNA modification; tRNA-queuosine biosynthesis. Catalyzes the NADPH-dependent reduction of 7-cyano-7-deazaguanine (preQ0) to 7-aminomethyl-7-deazaguanine (preQ1). This Prochlorococcus marinus (strain SARG / CCMP1375 / SS120) protein is NADPH-dependent 7-cyano-7-deazaguanine reductase.